The following is a 194-amino-acid chain: Dof zinc finger protein DOF4.2 (194 aa).

The Dof-type zinc finger occupies 21–75 (RVCPRCYSDQTRFSYFNNNKKSQPRYKCKNCCRCWTHGGVLRNIPVTGICDKSNL). Residues Cys-23, Cys-26, Cys-48, and Cys-51 each contribute to the Zn(2+) site.

It is found in the nucleus. Its function is as follows. Transcription factor that binds specifically to a 5'-AA[AG]G-3' consensus core sequence. In Arabidopsis thaliana (Mouse-ear cress), this protein is Dof zinc finger protein DOF4.2 (DOF4.2).